The primary structure comprises 192 residues: Putative 3-methyladenine DNA glycosylase (192 aa).

Belongs to the DNA glycosylase MPG family.

This Methanoculleus marisnigri (strain ATCC 35101 / DSM 1498 / JR1) protein is Putative 3-methyladenine DNA glycosylase.